Consider the following 331-residue polypeptide: Proton-translocating ferredoxin:NAD(+) oxidoreductase complex subunit D (331 aa).

The next 3 membrane-spanning stretches (helical) occupy residues 23-43, 44-64, and 84-106; these read ESVS…AVFG, VFNF…AAVV, and AFLT…MVAI. Residue Thr163 is modified to FMN phosphoryl threonine. A run of 4 helical transmembrane segments spans residues 196 to 216, 226 to 246, 251 to 271, and 273 to 293; these read NGSI…YLIY, VVMI…TGIF, VFHM…TDMV, and IPMT…LTSL.

The protein belongs to the NqrB/RnfD family. The complex is composed of six subunits: RnfA, RnfB, RnfC, RnfD, RnfE and RnfG. Requires FMN as cofactor.

The protein localises to the cell membrane. Functionally, part of a membrane-bound complex that couples electron transfer with translocation of ions across the membrane. Couples electron transfer from reduced ferredoxin to NAD(+) with translocation of H(+) out of the cell. Essential for energy conservation during autotrophic growth. Contributes to ATP synthesis during heterotrophic growth. The polypeptide is Proton-translocating ferredoxin:NAD(+) oxidoreductase complex subunit D (Clostridium ljungdahlii (strain ATCC 55383 / DSM 13528 / PETC)).